Consider the following 160-residue polypeptide: SsrA-binding protein (160 aa).

The disordered stretch occupies residues 133-160 (KKLHDKRETEKERDWNRQKSRLLKGNSQ). The segment covering 137-149 (DKRETEKERDWNR) has biased composition (basic and acidic residues).

The protein belongs to the SmpB family.

The protein resides in the cytoplasm. Its function is as follows. Required for rescue of stalled ribosomes mediated by trans-translation. Binds to transfer-messenger RNA (tmRNA), required for stable association of tmRNA with ribosomes. tmRNA and SmpB together mimic tRNA shape, replacing the anticodon stem-loop with SmpB. tmRNA is encoded by the ssrA gene; the 2 termini fold to resemble tRNA(Ala) and it encodes a 'tag peptide', a short internal open reading frame. During trans-translation Ala-aminoacylated tmRNA acts like a tRNA, entering the A-site of stalled ribosomes, displacing the stalled mRNA. The ribosome then switches to translate the ORF on the tmRNA; the nascent peptide is terminated with the 'tag peptide' encoded by the tmRNA and targeted for degradation. The ribosome is freed to recommence translation, which seems to be the essential function of trans-translation. This chain is SsrA-binding protein, found in Agrobacterium fabrum (strain C58 / ATCC 33970) (Agrobacterium tumefaciens (strain C58)).